A 413-amino-acid chain; its full sequence is Serine hydroxymethyltransferase (413 aa).

(6S)-5,6,7,8-tetrahydrofolate contacts are provided by residues leucine 119 and 123-125 (GHL). An N6-(pyridoxal phosphate)lysine modification is found at lysine 228. Residue 351–353 (SPF) participates in (6S)-5,6,7,8-tetrahydrofolate binding.

This sequence belongs to the SHMT family. Homodimer. Pyridoxal 5'-phosphate is required as a cofactor.

The protein resides in the cytoplasm. It catalyses the reaction (6R)-5,10-methylene-5,6,7,8-tetrahydrofolate + glycine + H2O = (6S)-5,6,7,8-tetrahydrofolate + L-serine. The protein operates within one-carbon metabolism; tetrahydrofolate interconversion. It participates in amino-acid biosynthesis; glycine biosynthesis; glycine from L-serine: step 1/1. Functionally, catalyzes the reversible interconversion of serine and glycine with tetrahydrofolate (THF) serving as the one-carbon carrier. This reaction serves as the major source of one-carbon groups required for the biosynthesis of purines, thymidylate, methionine, and other important biomolecules. Also exhibits THF-independent aldolase activity toward beta-hydroxyamino acids, producing glycine and aldehydes, via a retro-aldol mechanism. This is Serine hydroxymethyltransferase from Lysinibacillus sphaericus (strain C3-41).